A 117-amino-acid polypeptide reads, in one-letter code: Large ribosomal subunit protein eL8 (117 aa).

The protein belongs to the eukaryotic ribosomal protein eL8 family. As to quaternary structure, part of the 50S ribosomal subunit. Probably part of the RNase P complex.

The protein resides in the cytoplasm. Its function is as follows. Multifunctional RNA-binding protein that recognizes the K-turn motif in ribosomal RNA, the RNA component of RNase P, box H/ACA, box C/D and box C'/D' sRNAs. The protein is Large ribosomal subunit protein eL8 of Methanocaldococcus jannaschii (strain ATCC 43067 / DSM 2661 / JAL-1 / JCM 10045 / NBRC 100440) (Methanococcus jannaschii).